The primary structure comprises 441 residues: Ribulose bisphosphate carboxylase large chain (441 aa).

The residue at position 5 (K5) is an N6,N6,N6-trimethyllysine. The substrate site is built by N114 and T164. K166 (proton acceptor) is an active-site residue. K168 lines the substrate pocket. Mg(2+)-binding residues include K192, D194, and E195. K192 carries the N6-carboxylysine modification. H285 acts as the Proton acceptor in catalysis. Substrate contacts are provided by R286, H318, and S370.

Belongs to the RuBisCO large chain family. Type I subfamily. Heterohexadecamer of 8 large chains and 8 small chains; disulfide-linked. The disulfide link is formed within the large subunit homodimers. Requires Mg(2+) as cofactor. Post-translationally, the disulfide bond which can form in the large chain dimeric partners within the hexadecamer appears to be associated with oxidative stress and protein turnover.

It localises to the plastid. The protein resides in the chloroplast. The enzyme catalyses 2 (2R)-3-phosphoglycerate + 2 H(+) = D-ribulose 1,5-bisphosphate + CO2 + H2O. It catalyses the reaction D-ribulose 1,5-bisphosphate + O2 = 2-phosphoglycolate + (2R)-3-phosphoglycerate + 2 H(+). In terms of biological role, ruBisCO catalyzes two reactions: the carboxylation of D-ribulose 1,5-bisphosphate, the primary event in carbon dioxide fixation, as well as the oxidative fragmentation of the pentose substrate in the photorespiration process. Both reactions occur simultaneously and in competition at the same active site. This Pellaea rotundifolia (Button fern) protein is Ribulose bisphosphate carboxylase large chain.